A 254-amino-acid chain; its full sequence is Mediator of RNA polymerase II transcription subunit 6 (254 aa).

The interval 190 to 254 (PTFYQTKPGE…PPPEKRARVQ (65 aa)) is disordered. Residues 227-245 (PPAPPAPPRPPPQTTPNKP) are compositionally biased toward pro residues.

Belongs to the Mediator complex subunit 6 family. In terms of assembly, component of the Mediator complex.

It is found in the nucleus. In terms of biological role, component of the Mediator complex, a coactivator involved in the regulated transcription of nearly all RNA polymerase II-dependent genes. Mediator functions as a bridge to convey information from gene-specific regulatory proteins to the basal RNA polymerase II transcription machinery. Mediator is recruited to promoters by direct interactions with regulatory proteins and serves as a scaffold for the assembly of a functional preinitiation complex with RNA polymerase II and the general transcription factors. This Danio rerio (Zebrafish) protein is Mediator of RNA polymerase II transcription subunit 6 (med6).